The primary structure comprises 287 residues: Syntaxin-11 (287 aa).

A coiled-coil region spans residues 41 to 71 (LESLYRVIQDIQDENQLLLIDVRRLGRQNVR). Residues 204–266 (LNEIESRHRE…GEAKAQVRKA (63 aa)) enclose the t-SNARE coiled-coil homology domain.

This sequence belongs to the syntaxin family. Interacts with the SNARE proteins SNAP-23 and VAMP.

The protein resides in the membrane. It is found in the golgi apparatus. The protein localises to the trans-Golgi network membrane. SNARE that acts to regulate protein transport between late endosomes and the trans-Golgi network. The protein is Syntaxin-11 (Stx11) of Mus musculus (Mouse).